A 427-amino-acid polypeptide reads, in one-letter code: Trigger factor (427 aa).

The PPIase FKBP-type domain maps to 160 to 240 (GDTLIGDVTK…VKEVKRLELP (81 aa)).

The protein belongs to the FKBP-type PPIase family. Tig subfamily.

The protein localises to the cytoplasm. It catalyses the reaction [protein]-peptidylproline (omega=180) = [protein]-peptidylproline (omega=0). Its function is as follows. Involved in protein export. Acts as a chaperone by maintaining the newly synthesized protein in an open conformation. Functions as a peptidyl-prolyl cis-trans isomerase. This chain is Trigger factor, found in Chlorobaculum parvum (strain DSM 263 / NCIMB 8327) (Chlorobium vibrioforme subsp. thiosulfatophilum).